The chain runs to 117 residues: Photosystem II reaction center Psb28 protein (117 aa).

The protein belongs to the Psb28 family. In terms of assembly, part of the photosystem II complex.

Its subcellular location is the cellular thylakoid membrane. This is Photosystem II reaction center Psb28 protein from Prochlorococcus marinus (strain MIT 9312).